A 73-amino-acid polypeptide reads, in one-letter code: Sec-independent protein translocase protein TatA (73 aa).

The chain crosses the membrane as a helical span at residues 1 to 21; the sequence is MGSFSIWHWLIVLVIVMLVFG. The interval 43-73 is disordered; sequence MKEGDDKAAPAKELRDSTTIDVDAKEKTRQQ.

Belongs to the TatA/E family. In terms of assembly, the Tat system comprises two distinct complexes: a TatABC complex, containing multiple copies of TatA, TatB and TatC subunits, and a separate TatA complex, containing only TatA subunits. Substrates initially bind to the TatABC complex, which probably triggers association of the separate TatA complex to form the active translocon.

It is found in the cell inner membrane. Functionally, part of the twin-arginine translocation (Tat) system that transports large folded proteins containing a characteristic twin-arginine motif in their signal peptide across membranes. TatA could form the protein-conducting channel of the Tat system. This Cupriavidus pinatubonensis (strain JMP 134 / LMG 1197) (Cupriavidus necator (strain JMP 134)) protein is Sec-independent protein translocase protein TatA.